Reading from the N-terminus, the 211-residue chain is Probable nicotinate-nucleotide adenylyltransferase (211 aa).

It belongs to the NadD family.

The enzyme catalyses nicotinate beta-D-ribonucleotide + ATP + H(+) = deamido-NAD(+) + diphosphate. It functions in the pathway cofactor biosynthesis; NAD(+) biosynthesis; deamido-NAD(+) from nicotinate D-ribonucleotide: step 1/1. In terms of biological role, catalyzes the reversible adenylation of nicotinate mononucleotide (NaMN) to nicotinic acid adenine dinucleotide (NaAD). This Lactiplantibacillus plantarum (strain ATCC BAA-793 / NCIMB 8826 / WCFS1) (Lactobacillus plantarum) protein is Probable nicotinate-nucleotide adenylyltransferase.